A 558-amino-acid polypeptide reads, in one-letter code: Probable beta-glucosidase btgE (558 aa).

Positions Met1–Ala18 are cleaved as a signal peptide. 2 disordered regions span residues Ser64–Pro105 and Leu251–Met305. Low complexity-rich tracts occupy residues Pro76–Pro105 and Pro252–Ala292. Polar residues predominate over residues Glu293 to Met305. Catalysis depends on Glu399, which acts as the Proton donor. The Nucleophile role is filled by Glu495.

It belongs to the glycosyl hydrolase 17 family.

The protein resides in the secreted. It localises to the cell wall. It carries out the reaction Hydrolysis of terminal, non-reducing beta-D-glucosyl residues with release of beta-D-glucose.. Its pathway is glycan metabolism; cellulose degradation. Beta-glucosidases are one of a number of cellulolytic enzymes involved in the degradation of cellulosic biomass. Catalyzes the last step releasing glucose from the inhibitory cellobiose. The sequence is that of Probable beta-glucosidase btgE (btgE) from Aspergillus terreus (strain NIH 2624 / FGSC A1156).